The following is a 280-amino-acid chain: 4-hydroxy-tetrahydrodipicolinate reductase (280 aa).

Residues 14-19, Asp-40, 106-108, and 130-133 each bind NAD(+); these read GAAGRM, ATT, and APSM. His-166 (proton donor/acceptor) is an active-site residue. His-167 provides a ligand contact to (S)-2,3,4,5-tetrahydrodipicolinate. Lys-170 functions as the Proton donor in the catalytic mechanism. 176–177 provides a ligand contact to (S)-2,3,4,5-tetrahydrodipicolinate; it reads GT.

This sequence belongs to the DapB family.

The protein resides in the cytoplasm. The catalysed reaction is (S)-2,3,4,5-tetrahydrodipicolinate + NAD(+) + H2O = (2S,4S)-4-hydroxy-2,3,4,5-tetrahydrodipicolinate + NADH + H(+). The enzyme catalyses (S)-2,3,4,5-tetrahydrodipicolinate + NADP(+) + H2O = (2S,4S)-4-hydroxy-2,3,4,5-tetrahydrodipicolinate + NADPH + H(+). It functions in the pathway amino-acid biosynthesis; L-lysine biosynthesis via DAP pathway; (S)-tetrahydrodipicolinate from L-aspartate: step 4/4. Functionally, catalyzes the conversion of 4-hydroxy-tetrahydrodipicolinate (HTPA) to tetrahydrodipicolinate. This is 4-hydroxy-tetrahydrodipicolinate reductase from Rhodopirellula baltica (strain DSM 10527 / NCIMB 13988 / SH1).